The sequence spans 291 residues: Glycine--tRNA ligase alpha subunit (291 aa).

The protein belongs to the class-II aminoacyl-tRNA synthetase family. Tetramer of two alpha and two beta subunits.

It localises to the cytoplasm. The enzyme catalyses tRNA(Gly) + glycine + ATP = glycyl-tRNA(Gly) + AMP + diphosphate. This chain is Glycine--tRNA ligase alpha subunit, found in Rhizorhabdus wittichii (strain DSM 6014 / CCUG 31198 / JCM 15750 / NBRC 105917 / EY 4224 / RW1) (Sphingomonas wittichii).